Consider the following 61-residue polypeptide: Prophage outer membrane lipoprotein RzoR (61 aa).

An N-terminal signal peptide occupies residues 1-19 (MRKLKMMLCVMMLPLVVVG). C20 carries the N-palmitoyl cysteine lipid modification. C20 is lipidated: S-diacylglycerol cysteine.

The protein belongs to the lambdalikevirus o-spanin family. In terms of assembly, homodimer; disulfide-linked. Interacts (via C-terminus) with RZ (via C-terminus). Part of the spanin complex which spans the entire periplasmic space. The spanin complex is composed of spanin, inner membrane subunit and spanin, outer membrane subunit.

The protein resides in the cell outer membrane. Functionally, component of the spanin complex that disrupts the outer membrane and causes cell lysis during virus exit. The spanin complex conducts the final step in cell lysis by disrupting the outer membrane after holin and endolysin action have permeabilized the inner membrane and degraded the host peptidoglycans. This is Prophage outer membrane lipoprotein RzoR (rzoR) from Escherichia coli (strain K12).